Reading from the N-terminus, the 362-residue chain is 3-dehydroquinate synthase (362 aa).

NAD(+) is bound by residues 71-76 (DGEQYK), 105-109 (GVVGD), 129-130 (TT), lysine 142, lysine 151, and 169-172 (CLKT). Zn(2+) is bound by residues glutamate 184, histidine 247, and histidine 264.

Belongs to the sugar phosphate cyclases superfamily. Dehydroquinate synthase family. The cofactor is Co(2+). It depends on Zn(2+) as a cofactor. Requires NAD(+) as cofactor.

The protein localises to the cytoplasm. The catalysed reaction is 7-phospho-2-dehydro-3-deoxy-D-arabino-heptonate = 3-dehydroquinate + phosphate. The protein operates within metabolic intermediate biosynthesis; chorismate biosynthesis; chorismate from D-erythrose 4-phosphate and phosphoenolpyruvate: step 2/7. Functionally, catalyzes the conversion of 3-deoxy-D-arabino-heptulosonate 7-phosphate (DAHP) to dehydroquinate (DHQ). The protein is 3-dehydroquinate synthase of Shigella dysenteriae serotype 1 (strain Sd197).